Consider the following 542-residue polypeptide: 1-aminocyclopropane-1-carboxylate synthase 6 (542 aa).

Residues 1–28 (MRRSGNGGAAKKKKKRSASAASERRPRA) are disordered. Position 379 is an N6-(pyridoxal phosphate)lysine (K379).

Belongs to the class-I pyridoxal-phosphate-dependent aminotransferase family. It depends on pyridoxal 5'-phosphate as a cofactor. Expressed in leaves.

The protein resides in the plastid. It localises to the amyloplast membrane. The enzyme catalyses S-adenosyl-L-methionine = 1-aminocyclopropane-1-carboxylate + S-methyl-5'-thioadenosine + H(+). It participates in alkene biosynthesis; ethylene biosynthesis via S-adenosyl-L-methionine; ethylene from S-adenosyl-L-methionine: step 1/2. Catalyzes the formation of 1-aminocyclopropane-1-carboxylate, a direct precursor of ethylene in higher plants. Required for the regulation of starch grain size in endosperm. The protein is 1-aminocyclopropane-1-carboxylate synthase 6 of Oryza sativa subsp. japonica (Rice).